Consider the following 262-residue polypeptide: Indole-3-glycerol phosphate synthase (262 aa).

This sequence belongs to the TrpC family.

The catalysed reaction is 1-(2-carboxyphenylamino)-1-deoxy-D-ribulose 5-phosphate + H(+) = (1S,2R)-1-C-(indol-3-yl)glycerol 3-phosphate + CO2 + H2O. Its pathway is amino-acid biosynthesis; L-tryptophan biosynthesis; L-tryptophan from chorismate: step 4/5. This is Indole-3-glycerol phosphate synthase from Bordetella avium (strain 197N).